A 308-amino-acid polypeptide reads, in one-letter code: tRNA pseudouridine synthase B (308 aa).

D47 serves as the catalytic Nucleophile.

This sequence belongs to the pseudouridine synthase TruB family. Type 1 subfamily.

It carries out the reaction uridine(55) in tRNA = pseudouridine(55) in tRNA. Functionally, responsible for synthesis of pseudouridine from uracil-55 in the psi GC loop of transfer RNAs. The polypeptide is tRNA pseudouridine synthase B (Xanthomonas campestris pv. campestris (strain 8004)).